The sequence spans 412 residues: Putative competence-damage inducible protein (412 aa).

Belongs to the CinA family.

This chain is Putative competence-damage inducible protein, found in Bacillus anthracis.